The following is a 186-amino-acid chain: Protein GrpE (186 aa).

A compositionally biased stretch (basic and acidic residues) spans 1 to 17; sequence MKDEHNQEHDLSQKELE. The interval 1–32 is disordered; that stretch reads MKDEHNQEHDLSQKELESCENSCTCEGKKQEA.

This sequence belongs to the GrpE family. In terms of assembly, homodimer.

The protein localises to the cytoplasm. In terms of biological role, participates actively in the response to hyperosmotic and heat shock by preventing the aggregation of stress-denatured proteins, in association with DnaK and GrpE. It is the nucleotide exchange factor for DnaK and may function as a thermosensor. Unfolded proteins bind initially to DnaJ; upon interaction with the DnaJ-bound protein, DnaK hydrolyzes its bound ATP, resulting in the formation of a stable complex. GrpE releases ADP from DnaK; ATP binding to DnaK triggers the release of the substrate protein, thus completing the reaction cycle. Several rounds of ATP-dependent interactions between DnaJ, DnaK and GrpE are required for fully efficient folding. The chain is Protein GrpE from Helicobacter acinonychis (strain Sheeba).